We begin with the raw amino-acid sequence, 131 residues long: Encapsulated ferritin-like protein (131 aa).

3 residues coordinate Fe cation: Glu30, Glu60, and His63. The tract at residues 96–131 (EEEDTGSSSSVAASPTSAPSHGSLGIGSLRQEGKED) is disordered. Residues 98–131 (EDTGSSSSVAASPTSAPSHGSLGIGSLRQEGKED) form a targeting peptide region. Residues 102–115 (SSSSVAASPTSAPS) are compositionally biased toward low complexity.

Belongs to the ferritin-like superfamily. EncFtn family. In terms of assembly, forms dimers at all pH tested; under acidic conditions formes decamers. The N-terminal domain (residues 1-97) crystallizes as a decameric ring. Four decamers are loaded in the encapsulin nanocompartment in a tetrahedral arrangement. A 3 nm gap is consistently seen between the shell and the cargo. The target peptide extends away from the decameric ring, to allow binding to the interior of the encapsulin nanocompartment shell.

The protein localises to the encapsulin nanocompartment. The enzyme catalyses 4 Fe(2+) + O2 + 4 H(+) = 4 Fe(3+) + 2 H2O. The ferroxidase activity is inhibited by zinc. Cargo protein of a type 1 encapsulin nanocompartment. A ferritin-like ferroxidase that converts Fe(2+) to Fe(3+) iron inside the encapsulin nanocompartment. Mineralized Fe(3+) is released to the exterior of the decameric complex for deposition in the encapsulin nanocompartment. In solution the decamer binds 10-15 iron cations; in the encapsulin nanocompartment the decamer can bind up to 48 ions, perhaps via its internal channel, and on its exterior. The cargo-loaded nanocompartment maximally sequesters up to 4150 Fe ions. In Haliangium ochraceum (strain DSM 14365 / JCM 11303 / SMP-2), this protein is Encapsulated ferritin-like protein.